The sequence spans 515 residues: Phenylalanine--tRNA ligase beta subunit (515 aa).

In terms of domain architecture, B5 spans 263–334 (HEYVKIYVDE…IVMGYNQMPR (72 aa)). N312, D318, E321, and D322 together coordinate Mg(2+).

The protein belongs to the phenylalanyl-tRNA synthetase beta subunit family. Type 2 subfamily. Tetramer of two alpha and two beta subunits. Mg(2+) is required as a cofactor.

The protein resides in the cytoplasm. The catalysed reaction is tRNA(Phe) + L-phenylalanine + ATP = L-phenylalanyl-tRNA(Phe) + AMP + diphosphate + H(+). This Pyrobaculum aerophilum (strain ATCC 51768 / DSM 7523 / JCM 9630 / CIP 104966 / NBRC 100827 / IM2) protein is Phenylalanine--tRNA ligase beta subunit.